The primary structure comprises 301 residues: Cell division control protein 2 homolog 1 (301 aa).

Residues 5-297 (YQRLEKIGEG…AAQALEHPYF (293 aa)) form the Protein kinase domain. ATP contacts are provided by residues 11-19 (IGEGSYGVV) and lysine 34. At serine 15 the chain carries Phosphoserine. Tyrosine 16 is subject to Phosphotyrosine. The active-site Proton acceptor is aspartate 127. Residue threonine 160 is modified to Phosphothreonine; by CAK.

It belongs to the protein kinase superfamily. CMGC Ser/Thr protein kinase family. CDC2/CDKX subfamily. As to quaternary structure, forms a stable but non-covalent complex with a regulatory subunit and with a cyclin.

The catalysed reaction is L-seryl-[protein] + ATP = O-phospho-L-seryl-[protein] + ADP + H(+). It catalyses the reaction L-threonyl-[protein] + ATP = O-phospho-L-threonyl-[protein] + ADP + H(+). With respect to regulation, phosphorylation at Ser-15 or Tyr-16 inactivates the enzyme, while phosphorylation at Thr-160 activates it. Functionally, probably involved in the control of the cell cycle. This is Cell division control protein 2 homolog 1 (CRK1) from Trypanosoma congolense.